A 564-amino-acid chain; its full sequence is Serine/threonine-protein kinase DBF20 (564 aa).

Position 17 is a phosphoserine (Ser17). The disordered stretch occupies residues 24 to 62 (LNIPKPTSPQAQYRPARKSENGRLTPGLPRSYKPCDSDD). In terms of domain architecture, Protein kinase spans 169 to 469 (FQILTQVGQG…FEQVRKMSYF (301 aa)). ATP-binding positions include 175–183 (VGQGGYGQV) and Lys198. The Proton acceptor role is filled by Asp292. Residue Ser366 is modified to Phosphoserine. In terms of domain architecture, AGC-kinase C-terminal spans 470-547 (AEINFETLRT…RHRDGKQGSS (78 aa)). Residue Thr536 is modified to Phosphothreonine.

The protein belongs to the protein kinase superfamily. Ser/Thr protein kinase family.

The catalysed reaction is L-seryl-[protein] + ATP = O-phospho-L-seryl-[protein] + ADP + H(+). The enzyme catalyses L-threonyl-[protein] + ATP = O-phospho-L-threonyl-[protein] + ADP + H(+). Functionally, is probably a Ser/Thr-protein kinase that may function in initiation of DNA synthesis and also in late nuclear division. The protein is Serine/threonine-protein kinase DBF20 (DBF20) of Saccharomyces cerevisiae (strain ATCC 204508 / S288c) (Baker's yeast).